Reading from the N-terminus, the 662-residue chain is Envelope glycoprotein (662 aa).

The N-terminal stretch at 1-34 (MEGPTHPKPSKDKTFSWDLMILVGVLLRLDVGMA) is a signal peptide. At 35–606 (NPSPHQIYNV…FNKSPWFTTL (572 aa)) the chain is on the extracellular side. N-linked (GlcNAc...) asparagine; by host glycans are attached at residues Asn43 and Asn58. 2 cysteine pairs are disulfide-bonded: Cys115/Cys132 and Cys124/Cys137. The segment at 251–281 (VLPDQKPPSRQSQIESRVTPHHSQGNGGTPG) is disordered. The span at 258 to 274 (PSRQSQIESRVTPHHSQ) shows a compositional bias: polar residues. Residues Asn286, Asn322, and Asn327 are each glycosylated (N-linked (GlcNAc...) asparagine; by host). Intrachain disulfides connect Cys332–Cys335, Cys332–Cys559, and Cys551–Cys558. Positions 332–335 (CWLC) match the CXXC motif. N-linked (GlcNAc...) asparagine; by host glycosylation is found at Asn351, Asn354, and Asn430. The tract at residues 468–488 (ISLTVALMLGGLTVGGIAAGV) is fusion peptide. Coiled coils occupy residues 496–545 (LETA…ILFL) and 555–591 (KEECCFYADHTGLVRDNMAKLRERLKQRQQLFDSQQG). Positions 534-550 (LQNRRGLDILFLQEGGL) are immunosuppression. The short motif at 551-559 (CAALKEECC) is the CX6CC element. Residues 607–627 (ISSIMGPLLILLLILLFGPCI) traverse the membrane as a helical segment. Cys626 carries the S-palmitoyl cysteine; by host lipid modification. The Cytoplasmic segment spans residues 628-662 (LNRLVQFVKDRISVVQALILTQQYQQIKQYDPDQP).

In terms of assembly, the mature envelope protein (Env) consists of a trimer of SU-TM heterodimers attached by a labile interchain disulfide bond. Post-translationally, specific enzymatic cleavages in vivo yield mature proteins. Envelope glycoproteins are synthesized as an inactive precursor that is N-glycosylated and processed likely by host cell furin or by a furin-like protease in the Golgi to yield the mature SU and TM proteins. The cleavage site between SU and TM requires the minimal sequence [KR]-X-[KR]-R. The R-peptide is released from the C-terminus of the cytoplasmic tail of the TM protein upon particle formation as a result of proteolytic cleavage by the viral protease. Cleavage of this peptide is required for TM to become fusogenic. In terms of processing, the CXXC motif is highly conserved across a broad range of retroviral envelope proteins. It is thought to participate in the formation of a labile disulfide bond possibly with the CX6CC motif present in the transmembrane protein. Isomerization of the intersubunit disulfide bond to an SU intrachain disulfide bond is thought to occur upon receptor recognition in order to allow membrane fusion. The transmembrane protein is palmitoylated. Post-translationally, the R-peptide is palmitoylated.

It localises to the virion membrane. It is found in the host cell membrane. Functionally, the surface protein (SU) attaches the virus to the host cell by binding to its receptor. This interaction triggers the refolding of the transmembrane protein (TM) and is thought to activate its fusogenic potential by unmasking its fusion peptide. Fusion occurs at the host cell plasma membrane. Its function is as follows. The transmembrane protein (TM) acts as a class I viral fusion protein. Under the current model, the protein has at least 3 conformational states: pre-fusion native state, pre-hairpin intermediate state, and post-fusion hairpin state. During viral and target cell membrane fusion, the coiled coil regions (heptad repeats) assume a trimer-of-hairpins structure, positioning the fusion peptide in close proximity to the C-terminal region of the ectodomain. The formation of this structure appears to drive apposition and subsequent fusion of viral and target cell membranes. Membranes fusion leads to delivery of the nucleocapsid into the cytoplasm. This chain is Envelope glycoprotein (env), found in Felis catus (Cat).